The sequence spans 214 residues: MSFNSPFFDFFDNINNEVDAFNRLLGEGGLRGYAPRRQLANTPAKDSTGKEVARPNNYAGALYDPRDETLDDWFDNDLSLFPSGFGFPRSVAVPVDILDHDNNYELKVVVPGVKSKKDIDIEYHQNKNQILVSGEIPSTLNEESKDKVKVKESSSGKFKRVITLPDYPGVDADNIKADYANGVLTLTVPKLKPQKDGKNHVKKIEVSSQESWGN.

At S2 the chain carries N-acetylserine. At T42 the chain carries Phosphothreonine. Residues 86 to 207 (GFPRSVAVPV…KNHVKKIEVS (122 aa)) enclose the sHSP domain. Phosphoserine is present on S90. Phosphothreonine is present on T163. A disordered region spans residues 192 to 214 (KPQKDGKNHVKKIEVSSQESWGN). Over residues 193–205 (PQKDGKNHVKKIE) the composition is skewed to basic and acidic residues. S208 and S211 each carry phosphoserine.

This sequence belongs to the small heat shock protein (HSP20) family. In terms of assembly, present in large complexes.

Its function is as follows. Not known. One of the major polypeptides produced on heat shock. This is Heat shock protein 26 (HSP26) from Saccharomyces cerevisiae (strain ATCC 204508 / S288c) (Baker's yeast).